The sequence spans 146 residues: Hemoglobin subunit beta (146 aa).

The residue at position 1 (valine 1) is an N-acetylvaline. The Globin domain occupies 2-146 (HLTAEEKSAV…VANALAHKYH (145 aa)). At threonine 12 the chain carries Phosphothreonine. Serine 44 carries the post-translational modification Phosphoserine. Lysine 59 is subject to N6-acetyllysine. Histidine 63 is a heme b binding site. The residue at position 82 (lysine 82) is an N6-acetyllysine. Position 92 (histidine 92) interacts with heme b. Residue cysteine 93 is modified to S-nitrosocysteine. Lysine 144 bears the N6-acetyllysine mark.

This sequence belongs to the globin family. As to quaternary structure, heterotetramer of two alpha chains and two beta chains. In terms of tissue distribution, red blood cells.

In terms of biological role, involved in oxygen transport from the lung to the various peripheral tissues. The polypeptide is Hemoglobin subunit beta (HBB) (Meles meles (Eurasian badger)).